We begin with the raw amino-acid sequence, 74 residues long: Large ribosomal subunit protein uL29 (74 aa).

It belongs to the universal ribosomal protein uL29 family.

This chain is Large ribosomal subunit protein uL29, found in Streptomyces griseus subsp. griseus (strain JCM 4626 / CBS 651.72 / NBRC 13350 / KCC S-0626 / ISP 5235).